The primary structure comprises 459 residues: Flavin-containing monooxygenase FMO GS-OX5 (459 aa).

Residue 17-22 coordinates FAD; that stretch reads GAGAAG. An NADP(+)-binding site is contributed by 212–217; sequence GNFASG.

The protein belongs to the FMO family.

It carries out the reaction a (Z)-omega-(methylsulfanyl)-N-sulfo-alkylhydroximate S-glucoside + NADPH + O2 + H(+) = a (Z)-omega-(methylsulfinyl)-alkyl-glucosinolate + NADP(+) + H2O. Catalyzes the conversion of methylthioalkyl glucosinolates into methylsulfinylalkyl glucosinolates. Specific for 8-methylthiooctyl (8-MTO) glucosinolates. This chain is Flavin-containing monooxygenase FMO GS-OX5 (FMOGS-OX5), found in Arabidopsis thaliana (Mouse-ear cress).